Reading from the N-terminus, the 323-residue chain is Acetyl-coenzyme A carboxylase carboxyl transferase subunit alpha (323 aa).

The region spanning 39-293 is the CoA carboxyltransferase C-terminal domain; that stretch reads RLSKKSQQLT…RRALADSLRQ (255 aa).

Belongs to the AccA family. As to quaternary structure, acetyl-CoA carboxylase is a heterohexamer composed of biotin carboxyl carrier protein (AccB), biotin carboxylase (AccC) and two subunits each of ACCase subunit alpha (AccA) and ACCase subunit beta (AccD).

The protein localises to the cytoplasm. The catalysed reaction is N(6)-carboxybiotinyl-L-lysyl-[protein] + acetyl-CoA = N(6)-biotinyl-L-lysyl-[protein] + malonyl-CoA. Its pathway is lipid metabolism; malonyl-CoA biosynthesis; malonyl-CoA from acetyl-CoA: step 1/1. Component of the acetyl coenzyme A carboxylase (ACC) complex. First, biotin carboxylase catalyzes the carboxylation of biotin on its carrier protein (BCCP) and then the CO(2) group is transferred by the carboxyltransferase to acetyl-CoA to form malonyl-CoA. This chain is Acetyl-coenzyme A carboxylase carboxyl transferase subunit alpha, found in Paraburkholderia phymatum (strain DSM 17167 / CIP 108236 / LMG 21445 / STM815) (Burkholderia phymatum).